The primary structure comprises 640 residues: Fructose-1,6-bisphosphatase class 3 (640 aa).

The protein belongs to the FBPase class 3 family. Mn(2+) serves as cofactor.

The catalysed reaction is beta-D-fructose 1,6-bisphosphate + H2O = beta-D-fructose 6-phosphate + phosphate. It functions in the pathway carbohydrate biosynthesis; gluconeogenesis. The protein is Fructose-1,6-bisphosphatase class 3 of Lactococcus lactis subsp. lactis (strain IL1403) (Streptococcus lactis).